We begin with the raw amino-acid sequence, 1368 residues long: DNA-directed RNA polymerase subunit beta (1368 aa).

Belongs to the RNA polymerase beta chain family. The RNAP catalytic core consists of 2 alpha, 1 beta, 1 beta' and 1 omega subunit. When a sigma factor is associated with the core the holoenzyme is formed, which can initiate transcription.

It carries out the reaction RNA(n) + a ribonucleoside 5'-triphosphate = RNA(n+1) + diphosphate. In terms of biological role, DNA-dependent RNA polymerase catalyzes the transcription of DNA into RNA using the four ribonucleoside triphosphates as substrates. This Burkholderia thailandensis (strain ATCC 700388 / DSM 13276 / CCUG 48851 / CIP 106301 / E264) protein is DNA-directed RNA polymerase subunit beta.